The following is a 120-amino-acid chain: Large ribosomal subunit protein uL24 (120 aa).

This sequence belongs to the universal ribosomal protein uL24 family. Part of the 50S ribosomal subunit.

One of two assembly initiator proteins, it binds directly to the 5'-end of the 23S rRNA, where it nucleates assembly of the 50S subunit. Its function is as follows. One of the proteins that surrounds the polypeptide exit tunnel on the outside of the subunit. This chain is Large ribosomal subunit protein uL24, found in Pseudarthrobacter chlorophenolicus (strain ATCC 700700 / DSM 12829 / CIP 107037 / JCM 12360 / KCTC 9906 / NCIMB 13794 / A6) (Arthrobacter chlorophenolicus).